The primary structure comprises 366 residues: Chorismate synthase (366 aa).

2 residues coordinate NADP(+): R48 and R54. FMN-binding positions include 125-127, 238-239, G278, 293-297, and R319; these read RSS, NA, and KPTSS.

The protein belongs to the chorismate synthase family. As to quaternary structure, homotetramer. It depends on FMNH2 as a cofactor.

The catalysed reaction is 5-O-(1-carboxyvinyl)-3-phosphoshikimate = chorismate + phosphate. It functions in the pathway metabolic intermediate biosynthesis; chorismate biosynthesis; chorismate from D-erythrose 4-phosphate and phosphoenolpyruvate: step 7/7. Functionally, catalyzes the anti-1,4-elimination of the C-3 phosphate and the C-6 proR hydrogen from 5-enolpyruvylshikimate-3-phosphate (EPSP) to yield chorismate, which is the branch point compound that serves as the starting substrate for the three terminal pathways of aromatic amino acid biosynthesis. This reaction introduces a second double bond into the aromatic ring system. In Burkholderia orbicola (strain MC0-3), this protein is Chorismate synthase.